The sequence spans 384 residues: MAKHLFTSESVSEGHPDKIADQISDAVLDAILEQDPKARVACETYVKTGMVMVGGEITTSAWVDIEEITRETIREIGYVNSEMGFDANSCAVLSAIGKQSPDINQGVDREDPRELGAGDQGIMFGYASDETDVLMPAPVTYAHRLVQRQAKVRKNGTLPWLRPDAKSQVTFAYDQGKIVGIDAVVLSTQHSDCIDLPVLQEAVMEEIIKPVLPAEWLTKETKFFINPTGRFVIGGPMGDCGLTGRKIIVDTYGGAARHGGGAFSGKDPSKVDRSAAYAARYVAKNIVAAGLASRCEIQLSYAIGVADPTSIMIETFGTEKVSHDIIVDAVRQNFDLRPYGLIEMLDLLQPIYKKTAAYGHFGREEFPWEATDKVEMLRDFANFK.

ATP is bound at residue His15. Residue Asp17 participates in Mg(2+) binding. Glu43 lines the K(+) pocket. The L-methionine site is built by Glu56 and Gln99. Positions 99 to 109 are flexible loop; it reads QSPDINQGVDR. ATP-binding positions include 164 to 166, 230 to 231, Asp239, 245 to 246, Ala262, and Lys266; these read DAK, RF, and RK. L-methionine is bound at residue Asp239. Lys270 lines the L-methionine pocket.

The protein belongs to the AdoMet synthase family. As to quaternary structure, homotetramer; dimer of dimers. Requires Mg(2+) as cofactor. The cofactor is K(+).

The protein resides in the cytoplasm. It catalyses the reaction L-methionine + ATP + H2O = S-adenosyl-L-methionine + phosphate + diphosphate. The protein operates within amino-acid biosynthesis; S-adenosyl-L-methionine biosynthesis; S-adenosyl-L-methionine from L-methionine: step 1/1. Catalyzes the formation of S-adenosylmethionine (AdoMet) from methionine and ATP. The overall synthetic reaction is composed of two sequential steps, AdoMet formation and the subsequent tripolyphosphate hydrolysis which occurs prior to release of AdoMet from the enzyme. The sequence is that of S-adenosylmethionine synthase from Photobacterium profundum (strain SS9).